A 330-amino-acid chain; its full sequence is tRNA uridine(34) hydroxylase (330 aa).

Residues 123–217 enclose the Rhodanese domain; the sequence is SDPETILVDT…YLEEVPKEES (95 aa). The active-site Cysteine persulfide intermediate is the Cys-177. The tract at residues 310–330 is disordered; sequence LNKQQKQQAKEIARKKAKSEI. Positions 317–330 are enriched in basic and acidic residues; the sequence is QAKEIARKKAKSEI.

Belongs to the TrhO family.

It catalyses the reaction uridine(34) in tRNA + AH2 + O2 = 5-hydroxyuridine(34) in tRNA + A + H2O. Catalyzes oxygen-dependent 5-hydroxyuridine (ho5U) modification at position 34 in tRNAs. The chain is tRNA uridine(34) hydroxylase from Francisella philomiragia subsp. philomiragia (strain ATCC 25017 / CCUG 19701 / FSC 153 / O#319-036).